A 679-amino-acid polypeptide reads, in one-letter code: DNA-directed RNA polymerase subunit beta' (679 aa).

Residues Cys69, Cys71, Cys84, and Cys87 each coordinate Zn(2+). Mg(2+) contacts are provided by Asp486, Asp488, and Asp490.

It belongs to the RNA polymerase beta' chain family. RpoC1 subfamily. In terms of assembly, in plastids the minimal PEP RNA polymerase catalytic core is composed of four subunits: alpha, beta, beta', and beta''. When a (nuclear-encoded) sigma factor is associated with the core the holoenzyme is formed, which can initiate transcription. Mg(2+) is required as a cofactor. The cofactor is Zn(2+).

It is found in the plastid. The protein resides in the chloroplast. The enzyme catalyses RNA(n) + a ribonucleoside 5'-triphosphate = RNA(n+1) + diphosphate. Functionally, DNA-dependent RNA polymerase catalyzes the transcription of DNA into RNA using the four ribonucleoside triphosphates as substrates. The protein is DNA-directed RNA polymerase subunit beta' of Physcomitrium patens (Spreading-leaved earth moss).